A 276-amino-acid chain; its full sequence is Putative hydro-lyase Xaut_1503 (276 aa).

Belongs to the D-glutamate cyclase family.

This chain is Putative hydro-lyase Xaut_1503, found in Xanthobacter autotrophicus (strain ATCC BAA-1158 / Py2).